The following is a 177-amino-acid chain: R-phycoerythrin beta chain (177 aa).

Residues cysteine 50 and cysteine 61 each contribute to the phycourobilin site. Asparagine 72 bears the N4-methylasparagine mark. Residues cysteine 82 and cysteine 158 each contribute to the (2R,3E)-phycoerythrobilin site.

It belongs to the phycobiliprotein family. As to quaternary structure, heterodimer of an alpha and a beta chain. In terms of processing, contains two covalently linked phycoerythrobilin chromophores and one covalently linked phycourobilin chromophore.

It is found in the plastid. Its subcellular location is the chloroplast thylakoid membrane. Functionally, light-harvesting photosynthetic bile pigment-protein from the phycobiliprotein complex. In Pyropia haitanensis (Red seaweed), this protein is R-phycoerythrin beta chain (cpeB).